Reading from the N-terminus, the 1399-residue chain is DNA-directed RNA polymerase subunit beta' (1399 aa).

Zn(2+) is bound by residues Cys-70, Cys-72, Cys-85, and Cys-88. Mg(2+)-binding residues include Asp-460, Asp-462, and Asp-464. Residues Cys-814, Cys-888, Cys-895, and Cys-898 each coordinate Zn(2+).

The protein belongs to the RNA polymerase beta' chain family. As to quaternary structure, the RNAP catalytic core consists of 2 alpha, 1 beta, 1 beta' and 1 omega subunit. When a sigma factor is associated with the core the holoenzyme is formed, which can initiate transcription. Mg(2+) serves as cofactor. It depends on Zn(2+) as a cofactor.

It carries out the reaction RNA(n) + a ribonucleoside 5'-triphosphate = RNA(n+1) + diphosphate. Functionally, DNA-dependent RNA polymerase catalyzes the transcription of DNA into RNA using the four ribonucleoside triphosphates as substrates. The sequence is that of DNA-directed RNA polymerase subunit beta' from Pseudomonas entomophila (strain L48).